The sequence spans 330 residues: Tryptophan--tRNA ligase (330 aa).

ATP contacts are provided by residues 6–8 (QPT) and 14–15 (GN). Positions 7 to 15 (PTGSLHLGN) match the 'HIGH' region motif. D130 serves as a coordination point for L-tryptophan. Residues 142–144 (GED), V185, and 194–198 (KMSKS) each bind ATP. The short motif at 194-198 (KMSKS) is the 'KMSKS' region element.

It belongs to the class-I aminoacyl-tRNA synthetase family. Homodimer.

It localises to the cytoplasm. It carries out the reaction tRNA(Trp) + L-tryptophan + ATP = L-tryptophyl-tRNA(Trp) + AMP + diphosphate + H(+). Its function is as follows. Catalyzes the attachment of tryptophan to tRNA(Trp). This Thermosynechococcus vestitus (strain NIES-2133 / IAM M-273 / BP-1) protein is Tryptophan--tRNA ligase.